The primary structure comprises 79 residues: Conotoxin Vi6.4 (79 aa).

Residues 1–22 (MKLTCVLIITVLFLTASQLITA) form the signal peptide. A propeptide spanning residues 23 to 47 (DYSGDKRQYRAVRLRDEMRNFKGAR) is cleaved from the precursor. Disulfide bonds link cysteine 49-cysteine 62, cysteine 56-cysteine 67, and cysteine 61-cysteine 77. 4-hydroxyproline occurs at positions 60 and 63.

Belongs to the conotoxin O1 superfamily. In terms of tissue distribution, expressed by the venom duct.

The protein resides in the secreted. Its function is as follows. Ion channel inhibitor that inhibits the increase in intracellular calcium upon depolarization in DRG neurons. In vivo, both intraperitoneal and intracranial injections into mice induce hyperactivity. This Conus virgo (Virgin cone) protein is Conotoxin Vi6.4.